A 421-amino-acid chain; its full sequence is UDP-N-acetylglucosamine 1-carboxyvinyltransferase 2 (421 aa).

22–23 (KN) contributes to the phosphoenolpyruvate binding site. Arg95 serves as a coordination point for UDP-N-acetyl-alpha-D-glucosamine. The active-site Proton donor is Cys119. Position 119 is a 2-(S-cysteinyl)pyruvic acid O-phosphothioketal (Cys119). UDP-N-acetyl-alpha-D-glucosamine-binding positions include 124–128 (RPIEQ), Asp308, and Val330.

Belongs to the EPSP synthase family. MurA subfamily.

The protein localises to the cytoplasm. It catalyses the reaction phosphoenolpyruvate + UDP-N-acetyl-alpha-D-glucosamine = UDP-N-acetyl-3-O-(1-carboxyvinyl)-alpha-D-glucosamine + phosphate. It functions in the pathway cell wall biogenesis; peptidoglycan biosynthesis. Cell wall formation. Adds enolpyruvyl to UDP-N-acetylglucosamine. The sequence is that of UDP-N-acetylglucosamine 1-carboxyvinyltransferase 2 from Staphylococcus saprophyticus subsp. saprophyticus (strain ATCC 15305 / DSM 20229 / NCIMB 8711 / NCTC 7292 / S-41).